We begin with the raw amino-acid sequence, 635 residues long: Cationic amino acid transporter 4 (635 aa).

Transmembrane regions (helical) follow at residues 42–62 (LTLL…TGAV), 66–86 (VAGP…LLAA), and 113–133 (LWAF…GAAV). Residues N151 and N195 are each glycosylated (N-linked (GlcNAc...) asparagine). The helical transmembrane segment at 197 to 217 (TFSAISLLVILFIVILGFILA) threads the bilayer. N221 carries an N-linked (GlcNAc...) asparagine glycan. The next 5 membrane-spanning stretches (helical) occupy residues 229 to 249 (FAPF…YAFV), 270 to 290 (LAIA…STVL), 318 to 338 (GFIV…SLLF), 365 to 385 (QVPV…ALLL), and 391 to 411 (VQFL…SIIV). S422 and S427 each carry phosphoserine. A helical transmembrane segment spans residues 478-498 (VTWALGVMLASAITIGCVLVF). An N-linked (GlcNAc...) asparagine glycan is attached at N500. 3 helical membrane passes run 508–528 (WGYI…LLVL), 539–559 (LFQI…NICL), and 567–587 (TWVR…GYGI). N601 carries N-linked (GlcNAc...) asparagine glycosylation.

Belongs to the amino acid-polyamine-organocation (APC) superfamily. Cationic amino acid transporter (CAT) (TC 2.A.3.3) family.

It is found in the membrane. Its function is as follows. Involved in the transport of the cationic amino acids (arginine, lysine and ornithine). The protein is Cationic amino acid transporter 4 (SLC7A4) of Homo sapiens (Human).